The following is a 433-amino-acid chain: Acetyl-CoA-benzylalcohol acetyltransferase (433 aa).

Residues His-152 and Asp-377 each act as proton acceptor in the active site.

Belongs to the plant acyltransferase family. The N-terminus is blocked. In terms of tissue distribution, expressed in petals, style, sepals and stamens. Very low expression in stigma and not detected in leaves.

The enzyme catalyses benzyl alcohol + acetyl-CoA = benzyl acetate + CoA. It carries out the reaction (E)-cinnamyl alcohol + acetyl-CoA = (E)-cinnamyl acetate + CoA. In terms of biological role, involved in the biosynthesis of benzyl acetate, a major constituent of the floral scent. Can use benzylalcohol, cinnamylalcohol, 3-cis-hexene-1-ol or heptanol as substrates. Has some activity with 2-phenylethanol and 2-naphtalene-ethanol, but no activity with linalool, 2-hydroxybenzylalcohol, 3-hydroxybenzylalcohol or 4-hydroxybenzylalcohol. This chain is Acetyl-CoA-benzylalcohol acetyltransferase (BEAT), found in Clarkia breweri (Fairy fans).